The sequence spans 578 residues: Malonate--CoA ligase ACSF3, mitochondrial (578 aa).

Residues Met1–Gly19 constitute a mitochondrion transit peptide. Thr205 to Lys213 contributes to the ATP binding site. Residues Gln394–Gly413 are disordered. Asp459, Arg473, and Lys565 together coordinate ATP.

Belongs to the ATP-dependent AMP-binding enzyme family.

It is found in the mitochondrion. It catalyses the reaction tetracosanoate + ATP + CoA = tetracosanoyl-CoA + AMP + diphosphate. The enzyme catalyses malonate + ATP + CoA = malonyl-CoA + AMP + diphosphate. In terms of biological role, catalyzes the initial reaction in intramitochondrial fatty acid synthesis, by activating malonate and methylmalonate, but not acetate, into their respective CoA thioester. May have some preference toward very-long-chain substrates. The chain is Malonate--CoA ligase ACSF3, mitochondrial from Xenopus laevis (African clawed frog).